The chain runs to 351 residues: MNLVLRREGAVQFYAPDPQRYGSIYSAPVFYNPAMEKNRTLSVLLLRTLGGGLTVCEPLSGTGVRGIRYAVESKAVARLVLNDISRDAAELIKKNLELNGVDGEVYNDDANVLLHRLKNVCDVVDIDPFGSPAPYIHAAFRALRDEGLLCATATDTAVLVGRYPRKCLRRYWSTVRKTPFYIELGLRNLVGFIARVAASEDFSIRPLMSYWEGHYFRTCVAVARGARDADDALQNVGYVVYRRGMRQTTQLPDESSSGPLWLGPLGDPLIMHQMAQHGVYSDFLGVLEQEYSIEAPWHYRLPEFAVEGVSPTLAEALDLLRRSGIYATATHMAKDGFKADAGYGEVKRALF.

Residues 4–350 form the Trm1 methyltransferase domain; sequence VLRREGAVQF…AGYGEVKRAL (347 aa). The S-adenosyl-L-methionine site is built by arginine 39, arginine 65, aspartate 83, aspartate 109, and alanine 110.

This sequence belongs to the class I-like SAM-binding methyltransferase superfamily. Trm1 family.

The catalysed reaction is guanosine(26) in tRNA + 2 S-adenosyl-L-methionine = N(2)-dimethylguanosine(26) in tRNA + 2 S-adenosyl-L-homocysteine + 2 H(+). In terms of biological role, dimethylates a single guanine residue at position 26 of a number of tRNAs using S-adenosyl-L-methionine as donor of the methyl groups. The protein is tRNA (guanine(26)-N(2))-dimethyltransferase of Pyrobaculum neutrophilum (strain DSM 2338 / JCM 9278 / NBRC 100436 / V24Sta) (Thermoproteus neutrophilus).